We begin with the raw amino-acid sequence, 1237 residues long: Putative structural protein VP3 (1237 aa).

The PPPDE domain occupies Gly963–Gln1178. Active-site residues include His1001 and Cys1149.

The protein localises to the virion. This chain is Putative structural protein VP3 (S3), found in Lymantria dispar cypovirus 1 (isolate Rao) (LdCPV-1).